Consider the following 89-residue polypeptide: Myrmicitoxin(1)-Pr2a (89 aa).

A signal peptide spans 1–23 (MEIPKLLYIAVIAIGLSGSLTCA). A propeptide spanning residues 24 to 61 (TPLANPWADPEAEANPEAKAIAEATAEAIAEALAEPEP) is cleaved from the precursor. At N88 the chain carries Asparagine amide.

Belongs to the formicidae venom clade 1 family. In terms of tissue distribution, expressed by the venom gland.

It is found in the secreted. Vertebrate-selective toxin that causes pain by targeting voltage-gated sodium channels. This Pogonomyrmex rugosus (Desert harvester ant) protein is Myrmicitoxin(1)-Pr2a.